Reading from the N-terminus, the 102-residue chain is MTGSDLIAMMILAAGLFAIGLFGVLARRGIMFQLVALEVALSGPALGFVAAGAYHADPQGQGMFILVLTLAAAEVAVGLALFLRIRRIAGSDDSDVISGMKG.

3 consecutive transmembrane segments (helical) span residues 6–26 (LIAMMILAAGLFAIGLFGVLA), 30–50 (IMFQLVALEVALSGPALGFVA), and 63–83 (MFILVLTLAAAEVAVGLALFL).

It belongs to the complex I subunit 4L family. In terms of assembly, NDH-1 is composed of 14 different subunits. Subunits NuoA, H, J, K, L, M, N constitute the membrane sector of the complex.

The protein resides in the cell inner membrane. The catalysed reaction is a quinone + NADH + 5 H(+)(in) = a quinol + NAD(+) + 4 H(+)(out). NDH-1 shuttles electrons from NADH, via FMN and iron-sulfur (Fe-S) centers, to quinones in the respiratory chain. The immediate electron acceptor for the enzyme in this species is believed to be ubiquinone. Couples the redox reaction to proton translocation (for every two electrons transferred, four hydrogen ions are translocated across the cytoplasmic membrane), and thus conserves the redox energy in a proton gradient. In Rhodopseudomonas palustris (strain BisB5), this protein is NADH-quinone oxidoreductase subunit K.